A 66-amino-acid chain; its full sequence is Large ribosomal subunit protein bL35 (66 aa).

Over residues Met1–Lys46 the composition is skewed to basic residues. The tract at residues Met1–Arg52 is disordered.

This sequence belongs to the bacterial ribosomal protein bL35 family.

The chain is Large ribosomal subunit protein bL35 from Lactobacillus acidophilus (strain ATCC 700396 / NCK56 / N2 / NCFM).